Here is a 229-residue protein sequence, read N- to C-terminus: Small ribosomal subunit protein uS3 (229 aa).

The KH type-2 domain maps to 39–109 (MRKYIKEQLM…QVNIDIVEIR (71 aa)). Residues 210-229 (VVSQQNSRPSGPRGPRRPRA) form a disordered region.

It belongs to the universal ribosomal protein uS3 family. In terms of assembly, part of the 30S ribosomal subunit. Forms a tight complex with proteins S10 and S14.

In terms of biological role, binds the lower part of the 30S subunit head. Binds mRNA in the 70S ribosome, positioning it for translation. In Akkermansia muciniphila (strain ATCC BAA-835 / DSM 22959 / JCM 33894 / BCRC 81048 / CCUG 64013 / CIP 107961 / Muc), this protein is Small ribosomal subunit protein uS3.